The sequence spans 115 residues: NADH-ubiquinone oxidoreductase chain 3 (115 aa).

3 helical membrane-spanning segments follow: residues 3 to 23 (FVLA…ITFW), 55 to 75 (FFLV…LLPL), and 84 to 104 (LPLM…GLTY).

It belongs to the complex I subunit 3 family. As to quaternary structure, core subunit of respiratory chain NADH dehydrogenase (Complex I) which is composed of 45 different subunits. Interacts with TMEM186. Interacts with TMEM242.

The protein resides in the mitochondrion inner membrane. It carries out the reaction a ubiquinone + NADH + 5 H(+)(in) = a ubiquinol + NAD(+) + 4 H(+)(out). In terms of biological role, core subunit of the mitochondrial membrane respiratory chain NADH dehydrogenase (Complex I) which catalyzes electron transfer from NADH through the respiratory chain, using ubiquinone as an electron acceptor. Essential for the catalytic activity of complex I. The chain is NADH-ubiquinone oxidoreductase chain 3 from Pongo abelii (Sumatran orangutan).